The sequence spans 925 residues: MAACIGERIEDFKVGNLLGKGSFAGVYRAESIHTGLEVAIKMIDKKAMYKAGMVQRVQNEVKIHCQLKHPSVLELYNYFEDNNYVYLVLEMCHNGEMNRYLKNRMKPFSEREARHFMHQIITGMLYLHSHGILHRDLTLSNILLTRNMNIKIADFGLATQLNMPHEKHYTLCGTPNYISPEIATRSAHGLESDIWSLGCMFYTLLIGRPPFDTDTVKNTLNKVVLADYEMPAFLSREAQDLIHQLLRRNPADRLSLSSVLDHPFMSRNPSPKSKDVGTVEDSMDSGHATLSTTITASSGTSLSGSLLDRRLLVGQPLPNKITVFQKNKNSSDFSSGDGSNFCTQWGNPEQEANSRGRGRVIEDAEERPHSRYLRRAHSSDRASPSNQSRAKTYSVERCHSVEMLSKPRRSLDENQHSSNHHCLGKTPFPFADQTPQMEMVQQWFGNLQMNAHLGETNEHHTVSPNRDFQDYPDLQDTLRNAWTDTRASKNADTSANVHAVKQLSAMKYMSAHHHKPEVMPQEPGLHPHSEQSKNRSMESTLGYQKPTLRSITSPLIAHRLKPIRQKTKKAVVSILDSEEVCVELLRECASEGYVKEVLQISSDGTMITVYYPNDGRGFPLADRPPLPTDNISRYSFDNLPEKYWRKYQYASRFIQLVRSKTPKITYFTRYAKCILMENSPGADFEVWFYDGAKIHKTENLIHIIEKTGISYNLKNENEVTSLKEEVKVYMDHANEGHRICLSLESVISEEEKRSRGSSFFPIIVGRKPGNTSSPKALSAPPVDPSCCKGEQASASRLSVNSAAFPTQSPGLSPSTVTVEGLGHTATATGTGVSSSLPKSAQLLKSVFVKNVGWATQLTSGAVWVQFNDGSQLVVQAGVSSISYTSPDGQTTRYGENEKLPEYIKQKLQCLSSILLMFSNPTPNFQ.

The Protein kinase domain occupies 12-265 (FKVGNLLGKG…LSSVLDHPFM (254 aa)). ATP-binding positions include 18–26 (LGKGSFAGV) and lysine 41. N6-acetyllysine occurs at positions 45 and 46. The active-site Proton acceptor is the aspartate 136. Disordered stretches follow at residues 262 to 283 (HPFM…EDSM) and 328 to 394 (KNSS…KTYS). Residues 330–341 (SSDFSSGDGSNF) show a composition bias toward low complexity. Residues 342–353 (CTQWGNPEQEAN) show a composition bias toward polar residues. Positions 359 to 369 (RVIEDAEERPH) are enriched in basic and acidic residues. A compositionally biased stretch (polar residues) spans 381–391 (RASPSNQSRAK). Position 400 is a phosphoserine (serine 400). Residues 517–538 (EVMPQEPGLHPHSEQSKNRSME) form a disordered region. Positions 525–536 (LHPHSEQSKNRS) are enriched in basic and acidic residues. Residues 547–660 (TLRSITSPLI…SRFIQLVRSK (114 aa)) form the Cryptic POLO box 1 (CPB1) domain. In terms of domain architecture, Cryptic POLO box 2 (CPB2) spans 661–774 (TPKITYFTRY…GRKPGNTSSP (114 aa)). Position 778 is a phosphoserine (serine 778). One can recognise a POLO box domain in the interval 841-919 (QLLKSVFVKN…LSSILLMFSN (79 aa)).

It belongs to the protein kinase superfamily. Ser/Thr protein kinase family. CDC5/Polo subfamily. Homodimer. Interacts with CEP152 (via N-terminus). Interacts with CEP78; this interaction may be important for proper PLK4 localization to the centriole and PLK4-induced overduplication of centrioles. Interacts with CEP131. Interacts simultaneously with TENT5C and CEP192. Interacts with TENT5C; this interaction leads to the TENT5C recruitment in the centrosome. Interacts with CEP85; this interaction may be important in cell migration and centriole assembly. Post-translationally, ubiquitinated; leading to its degradation by the proteasome. Deubiquitinated by USP54; leading to PLK4 stabilization. Tyrosine-phosphorylated by TEC. In terms of processing, acetylation by KAT2A and KAT2B impairs kinase activity by shifting the kinase to an inactive conformation. In terms of tissue distribution, expressed in tissues associated with mitotic and meiotic cell division. Highly expressed in testis.

It is found in the cytoplasm. Its subcellular location is the cytoskeleton. The protein localises to the microtubule organizing center. It localises to the centrosome. The protein resides in the centriole. It is found in the nucleus. Its subcellular location is the nucleolus. The protein localises to the cleavage furrow. The enzyme catalyses L-seryl-[protein] + ATP = O-phospho-L-seryl-[protein] + ADP + H(+). It carries out the reaction L-threonyl-[protein] + ATP = O-phospho-L-threonyl-[protein] + ADP + H(+). Functionally, serine/threonine-protein kinase that plays a central role in centriole duplication. Able to trigger procentriole formation on the surface of the parental centriole cylinder, leading to the recruitment of centriole biogenesis proteins such as SASS6, CPAP, CCP110, CEP135 and gamma-tubulin. When overexpressed, it is able to induce centrosome amplification through the simultaneous generation of multiple procentrioles adjoining each parental centriole during S phase. Phosphorylates 'Ser-151' of FBXW5 during the G1/S transition, leading to inhibit FBXW5 ability to ubiquitinate SASS6. Its central role in centriole replication suggests a possible role in tumorigenesis, centrosome aberrations being frequently observed in tumors. Phosphorylates CDC25C and CHEK2. Also involved in deuterosome-mediated centriole amplification in multiciliated that can generate more than 100 centrioles. Also involved in trophoblast differentiation by phosphorylating HAND1, leading to disrupt the interaction between HAND1 and MDFIC and activate HAND1. Required for the recruitment of STIL to the centriole and for STIL-mediated centriole amplification. Phosphorylates CEP131 at 'Ser-78' and PCM1 at 'Ser-372' which is essential for proper organization and integrity of centriolar satellites. The chain is Serine/threonine-protein kinase PLK4 from Mus musculus (Mouse).